A 320-amino-acid polypeptide reads, in one-letter code: ATPase H(+)-transporting accessory protein 2 (320 aa).

Positions 1–17 (MLRVFVIFSLFIAAINA) are cleaved as a signal peptide. Residues 18 to 277 (SGEFTVLNRP…YGSDYPVIFN (260 aa)) lie on the Lumenal side of the membrane. A helical membrane pass occupies residues 278–298 (IILWFMVVFGLSLLAICYAIA). The Cytoplasmic segment spans residues 299–320 (AMDPGRDSIIYRMTSTRIKKDN). A Mediates retrograde transport to the ER motif is present at residues 317 to 320 (KKDN).

Interacts with fz and fz2. Interacts (via N-terminus) with stan. As an accessory component of the multisubunit proton-transporting vacuolar (V)-ATPase protein pump, might interacts with VhaAC45. Proteolytically cleaved by a furin-like convertase in the trans-Golgi network to generate N- and C-terminal fragments. Cleavage is reduced in the fat body.

The protein resides in the cell membrane. Its subcellular location is the endoplasmic reticulum membrane. It is found in the vesicle. The protein localises to the apical cell membrane. It localises to the golgi apparatus membrane. The protein resides in the secreted. Multifunctional protein which functions as a transmembrane receptor in the planar cell polarity (PCP) and is involved in the assembly of the proton-transporting vacuolar (V)-ATPase protein pump. As transmembrane receptor mediates fz/PCP signaling through interaction with fz and stabilizes asymmetric PCP domains through its interaction with stan. Also mediates Wnt/beta-cat signaling through interaction with fz/fz2. Probably by controlling the assembly of the V-ATPase pump and thus the acidification of the endo-lysosomal system, plays a role in many neuronal processes including synapse morphology and synaptic transmission. Functionally, stabilizes asymmetric Planar Cell Polarity (PCP) domains through its interaction with stan. The polypeptide is ATPase H(+)-transporting accessory protein 2 (Drosophila melanogaster (Fruit fly)).